Reading from the N-terminus, the 153-residue chain is Cytochrome c-type biogenesis protein CcmE (153 aa).

Residues 1–8 lie on the Cytoplasmic side of the membrane; that stretch reads MATRRGRR. The chain crosses the membrane as a helical; Signal-anchor for type II membrane protein span at residues 9–29; sequence ALLIAGGVGLLALAAALVLNA. Residues 30–153 lie on the Periplasmic side of the membrane; it reads LRSNLVFFFS…PSATLQTEAR (124 aa). Heme is bound by residues histidine 124 and tyrosine 128.

This sequence belongs to the CcmE/CycJ family.

The protein localises to the cell inner membrane. In terms of biological role, heme chaperone required for the biogenesis of c-type cytochromes. Transiently binds heme delivered by CcmC and transfers the heme to apo-cytochromes in a process facilitated by CcmF and CcmH. This Bordetella bronchiseptica (strain ATCC BAA-588 / NCTC 13252 / RB50) (Alcaligenes bronchisepticus) protein is Cytochrome c-type biogenesis protein CcmE.